The following is a 673-amino-acid chain: MNPSQLFQLHTEFEPCGDQPEAINQLVASILQNKRSQVLLGITGSGKTFTMANVIAKVQRPTLILAHNKTLAAQLYQEFKAFFPHNAVEYFVSYYDYYQPEAYVPRTDTYIEKDMSINDKIDKMRLSATRSLLERSDVIIVSSVSCIYGLGSPEYYRGMNLTLSQGQMRRRDDILLHLVEMQYKRNDFEFIRSTFRVRGDVLDIFPAYEEDLAIRVEMFGDEIEQISEIDPLTGKVKRRIASITIYPSSHHVTPEEIRLKAMETIRAELDERRQFYETEKKYLELERIQQRTMYDLEMLKEVGTCKGIENYSRHFSMRQPGAPPPCLLDYFPSDYLLVIDESHQTLPQVHAMFNGDRARKQTLVDFGFRLPSAFDNRPLRFEEVYGRIHQVVYVSATPGAWEVQEAGGEIVEQLIRPTGLLDPIIEIRPASGQVDDCLAEIRSHVSKGGRVLLTTLTKKLSEELTTYLNDLNVKAKYLHSDIDTIERVQIIRDLRLGVFDVLVGINLLREGLDIPEVSLVAILDADKEGFLRSETSLIQTCGRAARNAEGRVIMYADKITKSIKRTLEITESRRALQMRYNEQHGITPRTVKREISVLMESEEDQVTHPTKLEEEIFKAAEEAHHYLTLDEVRLKIKECEKEMKKAAKEFRFEEAADWRDQMRRYQQIELTLA.

Residues 28 to 414 (ASILQNKRSQ…EAGGEIVEQL (387 aa)) enclose the Helicase ATP-binding domain. 41 to 48 (GITGSGKT) contributes to the ATP binding site. The short motif at 94–117 (YYDYYQPEAYVPRTDTYIEKDMSI) is the Beta-hairpin element. A Helicase C-terminal domain is found at 433-595 (QVDDCLAEIR…ITPRTVKREI (163 aa)). Positions 633-668 (RLKIKECEKEMKKAAKEFRFEEAADWRDQMRRYQQI) constitute a UVR domain.

Belongs to the UvrB family. Forms a heterotetramer with UvrA during the search for lesions. Interacts with UvrC in an incision complex.

The protein localises to the cytoplasm. The UvrABC repair system catalyzes the recognition and processing of DNA lesions. A damage recognition complex composed of 2 UvrA and 2 UvrB subunits scans DNA for abnormalities. Upon binding of the UvrA(2)B(2) complex to a putative damaged site, the DNA wraps around one UvrB monomer. DNA wrap is dependent on ATP binding by UvrB and probably causes local melting of the DNA helix, facilitating insertion of UvrB beta-hairpin between the DNA strands. Then UvrB probes one DNA strand for the presence of a lesion. If a lesion is found the UvrA subunits dissociate and the UvrB-DNA preincision complex is formed. This complex is subsequently bound by UvrC and the second UvrB is released. If no lesion is found, the DNA wraps around the other UvrB subunit that will check the other stand for damage. In Protochlamydia amoebophila (strain UWE25), this protein is UvrABC system protein B.